The sequence spans 227 residues: Protein GET1 (227 aa).

Residues 1-3 are Lumenal-facing; it reads MSL. Residues 4-23 form a helical membrane-spanning segment; the sequence is LLTVFLIVFVTQLISWIGQN. The Cytoplasmic portion of the chain corresponds to 24 to 107; sequence VLLEWAYNLY…SFSTKFNAVI (84 aa). Positions 72 to 96 form a coiled coil; it reads AKLRRSVDKGLAELEKLNSEIATAK. Residues 108–128 form a helical membrane-spanning segment; it reads WALTSGVNLVIGWWYGRKAVF. Topologically, residues 129-151 are lumenal; sequence YLPEGWMGPLTWWFSFPFAPRGS. Residues 152-168 form a helical membrane-spanning segment; the sequence is VSVGVWSFACKRVLLVL. Residues 169-227 are Cytoplasmic-facing; that stretch reads ERMVKELFFAETQAKEVPVGFSPSSSSSSTPNPMSKASSGSPSPRRRTTVTVESEDEKS. The tract at residues 184–227 is disordered; it reads EVPVGFSPSSSSSSTPNPMSKASSGSPSPRRRTTVTVESEDEKS. A compositionally biased stretch (low complexity) spans 190–211; that stretch reads SPSSSSSSTPNPMSKASSGSPS.

Belongs to the WRB/GET1 family. In terms of assembly, interacts with GET3.

The protein resides in the endoplasmic reticulum membrane. Required for the post-translational delivery of tail-anchored (TA) proteins to the endoplasmic reticulum. Acts as a membrane receptor for soluble GET3, which recognizes and selectively binds the transmembrane domain of TA proteins in the cytosol. The chain is Protein GET1 from Coprinopsis cinerea (strain Okayama-7 / 130 / ATCC MYA-4618 / FGSC 9003) (Inky cap fungus).